A 60-amino-acid polypeptide reads, in one-letter code: Large ribosomal subunit protein bL32 (60 aa).

Residues 1–60 (MAVQQNKKSRSARDMRRSHDALESNALSVEKSTGEVHLRHHVSPDGFYRGRKVVDKGSDE) form a disordered region. The segment covering 11–22 (SARDMRRSHDAL) has biased composition (basic and acidic residues).

Belongs to the bacterial ribosomal protein bL32 family.

The protein is Large ribosomal subunit protein bL32 of Pseudomonas aeruginosa (strain LESB58).